Here is a 284-residue protein sequence, read N- to C-terminus: Homeobox protein SIX1 (284 aa).

Positions 124–183 (GEETSYCFKEKSRGVLREWYAHNPYPSPREKRELAEATGLTTTQVSNWFKNRRQRDRAAE) form a DNA-binding region, homeobox. The disordered stretch occupies residues 168-284 (VSNWFKNRRQ…LTSSLVDLGS (117 aa)). Basic and acidic residues predominate over residues 179–190 (DRAAEAKERENT). The segment covering 227 to 284 (DQNSVLLLQSNMGHARSSNYSLPGLTASQPSHGLQAHQHQLQDSLLGPLTSSLVDLGS) has biased composition (polar residues).

Belongs to the SIX/Sine oculis homeobox family. As to quaternary structure, interacts with DACH1. Interacts with EYA1. Interacts with EYA2. Interacts with CDH1. Interacts with TBX18. Interacts with CEBPA. Interacts with CEBPB. Interacts with EBF2. Phosphorylated during interphase; becomes hyperphosphorylated during mitosis. Hyperphosphorylation impairs binding to promoter elements. In terms of processing, ubiquitinated by the anaphase promoting complex (APC), leading to its proteasomal degradation. In terms of tissue distribution, expressed in phalangeal tendons and in skeletal muscle and in head and body mesenchyme.

The protein localises to the nucleus. The protein resides in the cytoplasm. Transcription factor that is involved in the regulation of cell proliferation, apoptosis and embryonic development. Plays an important role in the development of several organs, including kidney, muscle and inner ear. Depending on context, functions as a transcriptional repressor or activator. Lacks an activation domain, and requires interaction with EYA family members for transcription activation. Mediates nuclear translocation of EYA1 and EYA2. Binds the 5'-TCA[AG][AG]TTNC-3' motif present in the MEF3 element in the MYOG promoter and CIDEA enhancer. Regulates the expression of numerous genes, including MYC, CCNA1, CCND1 and EZR. Acts as an activator of the IGFBP5 promoter, probably coactivated by EYA2. Repression of precursor cell proliferation in myoblasts is switched to activation through recruitment of EYA3 to the SIX1-DACH1 complex. During myogenesis, seems to act together with EYA2 and DACH2. Regulates the expression of CCNA1. Promotes brown adipocyte differentiation. The protein is Homeobox protein SIX1 (Six1) of Mus musculus (Mouse).